The primary structure comprises 882 residues: Alanine--tRNA ligase (882 aa).

Zn(2+) contacts are provided by histidine 563, histidine 567, cysteine 665, and histidine 669.

This sequence belongs to the class-II aminoacyl-tRNA synthetase family. The cofactor is Zn(2+).

The protein resides in the cytoplasm. The enzyme catalyses tRNA(Ala) + L-alanine + ATP = L-alanyl-tRNA(Ala) + AMP + diphosphate. In terms of biological role, catalyzes the attachment of alanine to tRNA(Ala) in a two-step reaction: alanine is first activated by ATP to form Ala-AMP and then transferred to the acceptor end of tRNA(Ala). Also edits incorrectly charged Ser-tRNA(Ala) and Gly-tRNA(Ala) via its editing domain. This Synechococcus sp. (strain RCC307) protein is Alanine--tRNA ligase.